The sequence spans 448 residues: UDP-N-acetylmuramoylalanine--D-glutamate ligase (448 aa).

UDP-N-acetyl-alpha-D-muramoyl-L-alanine contacts are provided by Lys-17, Ser-18, Thr-38, Arg-39, and Gly-78. Position 116–122 (116–122) interacts with ATP; that stretch reads GSNAKST. 4 residues coordinate ADP: Ala-119, Lys-120, Ser-121, and Thr-122. Positions 143 and 188 each coordinate UDP-N-acetyl-alpha-D-muramoyl-L-alanine. Residues Asn-278, Arg-309, Asp-324, and Lys-326 each coordinate ADP.

Belongs to the MurCDEF family.

The protein localises to the cytoplasm. The enzyme catalyses UDP-N-acetyl-alpha-D-muramoyl-L-alanine + D-glutamate + ATP = UDP-N-acetyl-alpha-D-muramoyl-L-alanyl-D-glutamate + ADP + phosphate + H(+). The protein operates within cell wall biogenesis; peptidoglycan biosynthesis. Involved in cell wall formation. Catalyzes the addition of D-glutamate to the peptidoglycan precursor UDP-N-acetylmuramoyl-L-alanine (UMA). The protein is UDP-N-acetylmuramoylalanine--D-glutamate ligase of Pseudomonas aeruginosa (strain ATCC 15692 / DSM 22644 / CIP 104116 / JCM 14847 / LMG 12228 / 1C / PRS 101 / PAO1).